The primary structure comprises 201 residues: MSSKLRLGVAGPVGSGKTALVEALCRRLRDDLQLAVVTNDIYTQEDAQFLTRAGALDPERIRGVETGGCPHTAIREDCSINRAAVAELEAQFPELDLVLVESGGDNLAASFSPELVDLCIYVIDVAAGDKIPRKGGPGITRSDLLVINKIDLAPQVGADLALMEQDTRRMRGDRPWCFTNLHSGEGLEQVLAFLSQQLPNS.

11–18 (GPVGSGKT) contacts GTP.

It belongs to the SIMIBI class G3E GTPase family. UreG subfamily. As to quaternary structure, homodimer. UreD, UreF and UreG form a complex that acts as a GTP-hydrolysis-dependent molecular chaperone, activating the urease apoprotein by helping to assemble the nickel containing metallocenter of UreC. The UreE protein probably delivers the nickel.

Its subcellular location is the cytoplasm. Its function is as follows. Facilitates the functional incorporation of the urease nickel metallocenter. This process requires GTP hydrolysis, probably effectuated by UreG. This chain is Urease accessory protein UreG, found in Synechococcus sp. (strain CC9605).